A 359-amino-acid polypeptide reads, in one-letter code: MMKQIQVDLGERSYPIYIGQNLMNDSEALSRYLLKKRILIVTNETVAPLYLNQIQEVMVSFGEVESVILPDGEQFKDLAHLDAIFTALLQRNYGRDSVLVALGGGVIGDMTGFAAACYQRGIDFIQIPTTLLSQVDSSVGGKTAVNHPLGKNMIGAFYQPQLVLIDTQCLHTLPAREFAAGMAEVIKYGIMWDGKFFQWLENNVQALKRLETEALVYAISRCCEIKADVVSQDETEQGVRALLNLGHTFGHAIEAEMGYGNWLHGEAVAAGTVLAAQTARSLGLIDESIVCRIVQLLQAFDLPVSAPESMDFDSFIQHMRRDKKVLGGQIRLVLPTGIGQADVFSQVTESTLEQVICCA.

Residues aspartate 71–lysine 76, glycine 105–aspartate 109, threonine 129–threonine 130, lysine 142, lysine 151, and cysteine 169–threonine 172 contribute to the NAD(+) site. The Zn(2+) site is built by glutamate 184, histidine 247, and histidine 264.

It belongs to the sugar phosphate cyclases superfamily. Dehydroquinate synthase family. The cofactor is Co(2+). Zn(2+) is required as a cofactor. It depends on NAD(+) as a cofactor.

The protein localises to the cytoplasm. It catalyses the reaction 7-phospho-2-dehydro-3-deoxy-D-arabino-heptonate = 3-dehydroquinate + phosphate. It functions in the pathway metabolic intermediate biosynthesis; chorismate biosynthesis; chorismate from D-erythrose 4-phosphate and phosphoenolpyruvate: step 2/7. Catalyzes the conversion of 3-deoxy-D-arabino-heptulosonate 7-phosphate (DAHP) to dehydroquinate (DHQ). The sequence is that of 3-dehydroquinate synthase from Shewanella sp. (strain W3-18-1).